The following is a 387-amino-acid chain: Phosphoglycerate kinase (387 aa).

Residues 21–23 (DLN), R36, 59–62 (HLGR), R113, and R146 each bind substrate. ATP is bound by residues K197, E314, and 340 to 343 (GGDT).

This sequence belongs to the phosphoglycerate kinase family. Monomer.

It is found in the cytoplasm. The catalysed reaction is (2R)-3-phosphoglycerate + ATP = (2R)-3-phospho-glyceroyl phosphate + ADP. It participates in carbohydrate degradation; glycolysis; pyruvate from D-glyceraldehyde 3-phosphate: step 2/5. This Pseudomonas savastanoi pv. phaseolicola (strain 1448A / Race 6) (Pseudomonas syringae pv. phaseolicola (strain 1448A / Race 6)) protein is Phosphoglycerate kinase.